We begin with the raw amino-acid sequence, 502 residues long: 1-aminocyclopropane-1-carboxylate synthase-like protein 1 (502 aa).

A disordered region spans residues Met1–Met24. Glu106 contacts substrate. An N6-(pyridoxal phosphate)lysine modification is found at Lys324.

The protein belongs to the class-I pyridoxal-phosphate-dependent aminotransferase family.

Does not catalyze the synthesis of 1-aminocyclopropane-1-carboxylate but is capable of catalyzing the deamination of L-vinylglycine. The protein is 1-aminocyclopropane-1-carboxylate synthase-like protein 1 (Accs) of Mus musculus (Mouse).